The primary structure comprises 389 residues: S-adenosylmethionine synthase (389 aa).

An ATP-binding site is contributed by histidine 19. Aspartate 21 lines the Mg(2+) pocket. Residue glutamate 47 coordinates K(+). L-methionine contacts are provided by glutamate 60 and glutamine 103. Positions 103 to 113 (QSVDIAQGVSR) are flexible loop. ATP contacts are provided by residues 168 to 170 (DGK), 234 to 235 (RF), aspartate 243, 249 to 250 (RK), alanine 266, and lysine 270. Aspartate 243 provides a ligand contact to L-methionine. Lysine 274 contributes to the L-methionine binding site.

It belongs to the AdoMet synthase family. Homotetramer; dimer of dimers. Mg(2+) is required as a cofactor. It depends on K(+) as a cofactor.

It localises to the cytoplasm. The enzyme catalyses L-methionine + ATP + H2O = S-adenosyl-L-methionine + phosphate + diphosphate. It participates in amino-acid biosynthesis; S-adenosyl-L-methionine biosynthesis; S-adenosyl-L-methionine from L-methionine: step 1/1. Its function is as follows. Catalyzes the formation of S-adenosylmethionine (AdoMet) from methionine and ATP. The overall synthetic reaction is composed of two sequential steps, AdoMet formation and the subsequent tripolyphosphate hydrolysis which occurs prior to release of AdoMet from the enzyme. This Solidesulfovibrio magneticus (strain ATCC 700980 / DSM 13731 / RS-1) (Desulfovibrio magneticus) protein is S-adenosylmethionine synthase.